A 455-amino-acid polypeptide reads, in one-letter code: Glutamyl-tRNA reductase (455 aa).

Substrate is bound by residues threonine 49 to arginine 52, serine 109, glutamate 114 to glutamine 116, and glutamine 120. Cysteine 50 acts as the Nucleophile in catalysis. NADP(+) is bound at residue glycine 189–glycine 194.

The protein belongs to the glutamyl-tRNA reductase family. In terms of assembly, homodimer.

It carries out the reaction (S)-4-amino-5-oxopentanoate + tRNA(Glu) + NADP(+) = L-glutamyl-tRNA(Glu) + NADPH + H(+). The protein operates within porphyrin-containing compound metabolism; protoporphyrin-IX biosynthesis; 5-aminolevulinate from L-glutamyl-tRNA(Glu): step 1/2. Catalyzes the NADPH-dependent reduction of glutamyl-tRNA(Glu) to glutamate 1-semialdehyde (GSA). In Geobacillus thermodenitrificans (strain NG80-2), this protein is Glutamyl-tRNA reductase.